The primary structure comprises 256 residues: NAD(P)H-hydrate epimerase (256 aa).

A compositionally biased stretch (basic and acidic residues) spans 1-18; that stretch reads MADPRRDPAAESKDRPST. Residues 1–21 form a disordered region; it reads MADPRRDPAAESKDRPSTERV. The YjeF N-terminal domain maps to 23–229; the sequence is AYTADAVRAA…DLGLEPYLRR (207 aa). 74–78 contributes to the (6S)-NADPHX binding site; that stretch reads DNGGD. K(+)-binding residues include N75 and D135. (6S)-NADPHX is bound by residues 139–147 and D172; that span reads GIGRLADRR. S175 is a K(+) binding site.

Belongs to the NnrE/AIBP family. It depends on K(+) as a cofactor.

The catalysed reaction is (6R)-NADHX = (6S)-NADHX. It catalyses the reaction (6R)-NADPHX = (6S)-NADPHX. Functionally, catalyzes the epimerization of the S- and R-forms of NAD(P)HX, a damaged form of NAD(P)H that is a result of enzymatic or heat-dependent hydration. This is a prerequisite for the S-specific NAD(P)H-hydrate dehydratase to allow the repair of both epimers of NAD(P)HX. The sequence is that of NAD(P)H-hydrate epimerase from Microbacterium testaceum (strain StLB037).